Reading from the N-terminus, the 559-residue chain is Cytoplasmic polyadenylation element-binding protein 1 (559 aa).

The interval 223 to 244 (RLDHSSSPLTPPPSATSSGGLS) is disordered. RRM domains follow at residues 304–401 (CKVF…DAQV) and 423–504 (NTVF…PYLE). Residues C508, C511, C520, C525, C530, C533, H538, and H546 each contribute to the Zn(2+) site.

The protein belongs to the RRM CPEB family. Interacts with kinesin, dynein, APLP1, APLP2, TENT2/GLD2 and APP. Both phosphorylated and non phosphorylated forms interact with APLP1. Interacts with TENT4B; the interaction is required for TENT4B-mediated translational control.

It is found in the cytoplasm. Functionally, sequence-specific RNA-binding protein that regulates mRNA cytoplasmic polyadenylation and translation initiation during oocyte maturation and early development. Binds to the cytoplasmic polyadenylation element (CPE), an uridine-rich sequence element (consensus sequence 5'-UUUUUAU-3') within the mRNA 3'-UTR. This chain is Cytoplasmic polyadenylation element-binding protein 1 (cpeb1), found in Carassius auratus (Goldfish).